We begin with the raw amino-acid sequence, 287 residues long: Bifunctional protein FolD (287 aa).

NADP(+)-binding positions include 160–162 (GRS), Ser-189, and Ile-230.

This sequence belongs to the tetrahydrofolate dehydrogenase/cyclohydrolase family. In terms of assembly, homodimer.

The enzyme catalyses (6R)-5,10-methylene-5,6,7,8-tetrahydrofolate + NADP(+) = (6R)-5,10-methenyltetrahydrofolate + NADPH. It catalyses the reaction (6R)-5,10-methenyltetrahydrofolate + H2O = (6R)-10-formyltetrahydrofolate + H(+). Its pathway is one-carbon metabolism; tetrahydrofolate interconversion. Catalyzes the oxidation of 5,10-methylenetetrahydrofolate to 5,10-methenyltetrahydrofolate and then the hydrolysis of 5,10-methenyltetrahydrofolate to 10-formyltetrahydrofolate. The polypeptide is Bifunctional protein FolD (Chlamydia felis (strain Fe/C-56) (Chlamydophila felis)).